We begin with the raw amino-acid sequence, 126 residues long: Protein ApaG (126 aa).

The region spanning 2-126 (SALDNSIRVE…FRLATPGLLH (125 aa)) is the ApaG domain.

This chain is Protein ApaG, found in Shewanella oneidensis (strain ATCC 700550 / JCM 31522 / CIP 106686 / LMG 19005 / NCIMB 14063 / MR-1).